Reading from the N-terminus, the 300-residue chain is UDP-N-acetylenolpyruvoylglucosamine reductase (300 aa).

Residues 28 to 193 (KTGGPADWLA…LDATFALKLG (166 aa)) enclose the FAD-binding PCMH-type domain. The active site involves arginine 172. Serine 222 serves as the catalytic Proton donor. Residue glutamate 292 is part of the active site.

It belongs to the MurB family. Requires FAD as cofactor.

It localises to the cytoplasm. The enzyme catalyses UDP-N-acetyl-alpha-D-muramate + NADP(+) = UDP-N-acetyl-3-O-(1-carboxyvinyl)-alpha-D-glucosamine + NADPH + H(+). It participates in cell wall biogenesis; peptidoglycan biosynthesis. Its function is as follows. Cell wall formation. The sequence is that of UDP-N-acetylenolpyruvoylglucosamine reductase from Limosilactobacillus fermentum (strain NBRC 3956 / LMG 18251) (Lactobacillus fermentum).